Here is an 806-residue protein sequence, read N- to C-terminus: Leucine--tRNA ligase (806 aa).

Positions Pro-38–His-48 match the 'HIGH' region motif. Residues Lys-572 to Ser-576 carry the 'KMSKS' region motif. Residue Lys-575 coordinates ATP.

Belongs to the class-I aminoacyl-tRNA synthetase family.

It localises to the cytoplasm. The enzyme catalyses tRNA(Leu) + L-leucine + ATP = L-leucyl-tRNA(Leu) + AMP + diphosphate. The protein is Leucine--tRNA ligase of Helicobacter pylori (strain HPAG1).